The following is a 210-amino-acid chain: ATP-dependent Clp protease proteolytic subunit (210 aa).

Serine 114 functions as the Nucleophile in the catalytic mechanism. Residue histidine 139 is part of the active site.

It belongs to the peptidase S14 family. As to quaternary structure, fourteen ClpP subunits assemble into 2 heptameric rings which stack back to back to give a disk-like structure with a central cavity, resembling the structure of eukaryotic proteasomes.

It is found in the cytoplasm. The catalysed reaction is Hydrolysis of proteins to small peptides in the presence of ATP and magnesium. alpha-casein is the usual test substrate. In the absence of ATP, only oligopeptides shorter than five residues are hydrolyzed (such as succinyl-Leu-Tyr-|-NHMec, and Leu-Tyr-Leu-|-Tyr-Trp, in which cleavage of the -Tyr-|-Leu- and -Tyr-|-Trp bonds also occurs).. Functionally, cleaves peptides in various proteins in a process that requires ATP hydrolysis. Has a chymotrypsin-like activity. Plays a major role in the degradation of misfolded proteins. The chain is ATP-dependent Clp protease proteolytic subunit from Janthinobacterium sp. (strain Marseille) (Minibacterium massiliensis).